We begin with the raw amino-acid sequence, 359 residues long: 3-dehydroquinate synthase (359 aa).

Residues 71–76 (DGEAYK), 105–109 (GVVGD), 129–130 (TT), lysine 142, and lysine 151 each bind NAD(+). The Zn(2+) site is built by glutamate 184, histidine 247, and histidine 264.

Belongs to the sugar phosphate cyclases superfamily. Dehydroquinate synthase family. The cofactor is Co(2+). Requires Zn(2+) as cofactor. NAD(+) is required as a cofactor.

It is found in the cytoplasm. It catalyses the reaction 7-phospho-2-dehydro-3-deoxy-D-arabino-heptonate = 3-dehydroquinate + phosphate. It participates in metabolic intermediate biosynthesis; chorismate biosynthesis; chorismate from D-erythrose 4-phosphate and phosphoenolpyruvate: step 2/7. Catalyzes the conversion of 3-deoxy-D-arabino-heptulosonate 7-phosphate (DAHP) to dehydroquinate (DHQ). This chain is 3-dehydroquinate synthase, found in Burkholderia cenocepacia (strain HI2424).